We begin with the raw amino-acid sequence, 493 residues long: GTPase Der (493 aa).

2 EngA-type G domains span residues 3–166 (PVVA…SGKG) and 207–380 (LKLA…DCAT). GTP-binding positions include 9 to 16 (GRPNVGKS), 56 to 60 (DTGGI), 118 to 121 (NKTD), 213 to 220 (GKPNVGKS), 260 to 264 (DTAGV), and 325 to 328 (NKWD). The region spanning 381-465 (RRVNTSLLTR…PIRIQFKEGA (85 aa)) is the KH-like domain.

It belongs to the TRAFAC class TrmE-Era-EngA-EngB-Septin-like GTPase superfamily. EngA (Der) GTPase family. In terms of assembly, associates with the 50S ribosomal subunit.

GTPase that plays an essential role in the late steps of ribosome biogenesis. This Photorhabdus laumondii subsp. laumondii (strain DSM 15139 / CIP 105565 / TT01) (Photorhabdus luminescens subsp. laumondii) protein is GTPase Der.